The following is a 449-amino-acid chain: Phosphomannomutase (449 aa).

Ser97 serves as the catalytic Phosphoserine intermediate. Ser97, Asp237, Asp239, and Asp241 together coordinate Mg(2+).

The protein belongs to the phosphohexose mutase family. The cofactor is Mg(2+).

It carries out the reaction alpha-D-mannose 1-phosphate = D-mannose 6-phosphate. The protein operates within amino-acid biosynthesis. Functionally, catalyzes the formation of mannose-1-P from mannose-6-P. Can also use glucose-6-P. The protein is Phosphomannomutase (manB) of Methanocaldococcus jannaschii (strain ATCC 43067 / DSM 2661 / JAL-1 / JCM 10045 / NBRC 100440) (Methanococcus jannaschii).